Consider the following 331-residue polypeptide: Glycerol-3-phosphate dehydrogenase [NAD(P)+] (331 aa).

Trp-11, Arg-30, and Lys-105 together coordinate NADPH. Residues Lys-105, Gly-134, and Ser-136 each contribute to the sn-glycerol 3-phosphate site. Ala-138 contributes to the NADPH binding site. Residues Lys-189, Asp-242, Ser-252, Arg-253, and Asn-254 each contribute to the sn-glycerol 3-phosphate site. Catalysis depends on Lys-189, which acts as the Proton acceptor. Residue Arg-253 coordinates NADPH. Positions 277 and 279 each coordinate NADPH.

Belongs to the NAD-dependent glycerol-3-phosphate dehydrogenase family.

Its subcellular location is the cytoplasm. The catalysed reaction is sn-glycerol 3-phosphate + NAD(+) = dihydroxyacetone phosphate + NADH + H(+). It carries out the reaction sn-glycerol 3-phosphate + NADP(+) = dihydroxyacetone phosphate + NADPH + H(+). Its pathway is membrane lipid metabolism; glycerophospholipid metabolism. Its function is as follows. Catalyzes the reduction of the glycolytic intermediate dihydroxyacetone phosphate (DHAP) to sn-glycerol 3-phosphate (G3P), the key precursor for phospholipid synthesis. The polypeptide is Glycerol-3-phosphate dehydrogenase [NAD(P)+] (Herminiimonas arsenicoxydans).